Reading from the N-terminus, the 1349-residue chain is Membrane-associated phosphatidylinositol transfer protein 2 (1349 aa).

A disordered region spans residues 262–344; the sequence is EDGEEATELV…RDSDESSDDE (83 aa). Low complexity predominate over residues 302-322; the sequence is KQWSTSSKSSRSSKRGASPSR. Serine 337, serine 341, serine 368, and serine 589 each carry phosphoserine. Residues 618–631 are compositionally biased toward gly residues; sequence GGGGGSSGGGGSSG. The interval 618–671 is disordered; the sequence is GGGGGSSGGGGSSGGSSLESSRHLSRSNVDIPRSNGTEDPKRQLPRKRSDSSTY. Position 644 is a phosphoserine (serine 644). Basic and acidic residues predominate over residues 653–667; it reads GTEDPKRQLPRKRSD. Residues serine 700, serine 701, and serine 702 each carry the phosphoserine modification. The region spanning 715 to 963 is the DDHD domain; that stretch reads FDFEITDLFL…VSFLLRQVMR (249 aa). Arginine 828 carries the post-translational modification Omega-N-methylarginine. Positions 876–900 are disordered; that stretch reads LPAPSPTTPGPHPPARKASPGLERA. Pro residues predominate over residues 878-888; that stretch reads APSPTTPGPHP. Serine 1277 is modified (phosphoserine). Residues 1296-1326 are disordered; that stretch reads TISAQPSGPSHRHERTQSQADGEQRGQRSMS.

The protein belongs to the PtdIns transfer protein family. PI transfer class IIA subfamily. As to quaternary structure, interacts with PTK2B via its C-terminus. Interacts with CPNE4 (via VWFA domain). In terms of tissue distribution, highly expressed in brain, heart, ovary, testis and thymus. Detected in small intestine, prostate, pancreas, skeletal muscle, liver, colon and placenta.

It is found in the endomembrane system. Its function is as follows. Catalyzes the transfer of phosphatidylinositol and phosphatidylcholine between membranes (in vitro). Binds calcium ions. The chain is Membrane-associated phosphatidylinositol transfer protein 2 (PITPNM2) from Homo sapiens (Human).